Here is a 138-residue protein sequence, read N- to C-terminus: Cysteine desulfuration protein SufE (138 aa).

Residue Cys51 is the Cysteine persulfide intermediate of the active site.

This sequence belongs to the SufE family. As to quaternary structure, homodimer. Interacts with SufS.

Its subcellular location is the cytoplasm. The protein operates within cofactor biosynthesis; iron-sulfur cluster biosynthesis. Functionally, participates in cysteine desulfuration mediated by SufS. Cysteine desulfuration mobilizes sulfur from L-cysteine to yield L-alanine and constitutes an essential step in sulfur metabolism for biosynthesis of a variety of sulfur-containing biomolecules. Functions as a sulfur acceptor for SufS, by mediating the direct transfer of the sulfur atom from the S-sulfanylcysteine of SufS, an intermediate product of cysteine desulfuration process. The chain is Cysteine desulfuration protein SufE from Salmonella choleraesuis (strain SC-B67).